The chain runs to 198 residues: FMN-dependent NADH:quinone oxidoreductase (198 aa).

FMN contacts are provided by residues serine 10, 16 to 18 (SQS), 94 to 97 (MYNF), and 138 to 141 (TRGG).

This sequence belongs to the azoreductase type 1 family. Homodimer. FMN is required as a cofactor.

It catalyses the reaction 2 a quinone + NADH + H(+) = 2 a 1,4-benzosemiquinone + NAD(+). The catalysed reaction is N,N-dimethyl-1,4-phenylenediamine + anthranilate + 2 NAD(+) = 2-(4-dimethylaminophenyl)diazenylbenzoate + 2 NADH + 2 H(+). Its function is as follows. Quinone reductase that provides resistance to thiol-specific stress caused by electrophilic quinones. In terms of biological role, also exhibits azoreductase activity. Catalyzes the reductive cleavage of the azo bond in aromatic azo compounds to the corresponding amines. The sequence is that of FMN-dependent NADH:quinone oxidoreductase from Shewanella putrefaciens (strain CN-32 / ATCC BAA-453).